A 43-amino-acid chain; its full sequence is SPbeta prophage-derived uncharacterized protein YopG (43 aa).

This is SPbeta prophage-derived uncharacterized protein YopG (yopG) from Bacillus subtilis (strain 168).